The following is a 473-amino-acid chain: O-methyltransferase aclU (473 aa).

Residues D320 and 354–356 (GDF) contribute to the S-adenosyl-L-methionine site. Residue H373 is the Proton acceptor of the active site.

It belongs to the class I-like SAM-binding methyltransferase superfamily. Cation-independent O-methyltransferase family. COMT subfamily.

The protein operates within mycotoxin biosynthesis. In terms of biological role, O-methyltransferase; part of the gene cluster that mediates the biosynthesis of aspirochlorine (or antibiotic A30641), an unusual halogenated spiro compound with distinctive antifungal properties due to selective inhibition of protein biosynthesis, and which is also active against bacteria, viruses, and murine tumor cells. The non-ribosomal peptide synthetase (NRPS) aclP is responsible the formation of the diketopiperazine (DKP) core from the condensation of 2 phenylalanine residues. One Phe residue is tailored into chlorotyrosine by hydroxylation and chlorination, whereas the second Phe undergoes an unprecedented C-C bond cleavage to be converted into glycine. After formation of the DKP, sulfur is incorporated into the DKP by conjugation with glutathione by aclG, followed by its stepwise degradation to the thiol by aclI, aclJ and aclK, and the dithiol oxidation by aclT. In addition, oxygenases (aclB, aclC, aclL and aclO) and O-methyltransferases (aclM and aclU) act as tailoring enzymes to produce the intermediate dechloroaspirochlorine. Ultimately, chlorination of dechloroaspirochlorine by the halogenase aclH is the last step in the aspirochlorine pathway. The protein is O-methyltransferase aclU of Aspergillus oryzae (strain ATCC 42149 / RIB 40) (Yellow koji mold).